The primary structure comprises 201 residues: Pyridoxine/pyridoxamine 5'-phosphate oxidase (201 aa).

Residues 49 to 54, 64 to 65, lysine 71, and glutamine 93 each bind FMN; these read RMVLLK and YT. Lysine 54 provides a ligand contact to substrate. Substrate is bound by residues tyrosine 111, arginine 115, and serine 119. FMN contacts are provided by residues 128–129 and tryptophan 172; that span reads QS. 178–180 is a binding site for substrate; that stretch reads RLH. Arginine 182 provides a ligand contact to FMN.

It belongs to the pyridoxamine 5'-phosphate oxidase family. As to quaternary structure, homodimer. FMN serves as cofactor.

It catalyses the reaction pyridoxamine 5'-phosphate + O2 + H2O = pyridoxal 5'-phosphate + H2O2 + NH4(+). The catalysed reaction is pyridoxine 5'-phosphate + O2 = pyridoxal 5'-phosphate + H2O2. Its pathway is cofactor metabolism; pyridoxal 5'-phosphate salvage; pyridoxal 5'-phosphate from pyridoxamine 5'-phosphate: step 1/1. The protein operates within cofactor metabolism; pyridoxal 5'-phosphate salvage; pyridoxal 5'-phosphate from pyridoxine 5'-phosphate: step 1/1. Its function is as follows. Catalyzes the oxidation of either pyridoxine 5'-phosphate (PNP) or pyridoxamine 5'-phosphate (PMP) into pyridoxal 5'-phosphate (PLP). This is Pyridoxine/pyridoxamine 5'-phosphate oxidase from Ruegeria sp. (strain TM1040) (Silicibacter sp.).